The primary structure comprises 318 residues: Deoxyhypusine hydroxylase (318 aa).

HEAT-like PBS-type repeat units lie at residues 70 to 96 and 103 to 129; these read LKHE…VLEN and VRHE…YFKE. 8 residues coordinate Fe cation: histidine 72, glutamate 73, histidine 105, glutamate 106, histidine 231, glutamate 232, histidine 264, and glutamate 265. Residues 262-288 form an HEAT-like PBS-type 3 repeat; the sequence is VRHEAAEALGSIATDECLPVLQSFLND.

This sequence belongs to the deoxyhypusine hydroxylase family. The cofactor is Fe(2+).

Its subcellular location is the cytoplasm. It localises to the nucleus. It catalyses the reaction [eIF5A protein]-deoxyhypusine + AH2 + O2 = [eIF5A protein]-hypusine + A + H2O. It participates in protein modification; eIF5A hypusination. Catalyzes the hydroxylation of the N(6)-(4-aminobutyl)-L-lysine intermediate to form hypusine, an essential post-translational modification only found in mature eIF-5A factor. This Candida albicans (strain SC5314 / ATCC MYA-2876) (Yeast) protein is Deoxyhypusine hydroxylase.